We begin with the raw amino-acid sequence, 817 residues long: Cargo-transport protein YPP1 (817 aa).

The protein belongs to the YPP1 family. Interacts with ribosomes.

The protein resides in the cytoplasmic granule. Its subcellular location is the cell membrane. Involved in endocytosis. The chain is Cargo-transport protein YPP1 (YPP1) from Saccharomyces cerevisiae (strain ATCC 204508 / S288c) (Baker's yeast).